The primary structure comprises 120 residues: Ribosome-binding factor A (120 aa).

It belongs to the RbfA family. As to quaternary structure, monomer. Binds 30S ribosomal subunits, but not 50S ribosomal subunits or 70S ribosomes.

It is found in the cytoplasm. One of several proteins that assist in the late maturation steps of the functional core of the 30S ribosomal subunit. Associates with free 30S ribosomal subunits (but not with 30S subunits that are part of 70S ribosomes or polysomes). Required for efficient processing of 16S rRNA. May interact with the 5'-terminal helix region of 16S rRNA. In Rickettsia africae (strain ESF-5), this protein is Ribosome-binding factor A.